The chain runs to 1163 residues: Actin cross-linking toxin VgrG1 (1163 aa).

The 436-residue stretch at 728-1163 (TPDFPTHFPK…NPQEWQRIIA (436 aa)) folds into the ACD domain. ATP is bound at residue 739–743 (SIGIE). Mg(2+)-binding residues include Glu743 and Glu805. Ser808 provides a ligand contact to ATP. Gln889 contacts Mg(2+). Arg995 is an ATP binding site. Residue Glu1066 participates in Mg(2+) binding.

It belongs to the VgrG protein family. As to quaternary structure, interacts with protein VC1417. It depends on Mg(2+) as a cofactor.

The protein resides in the secreted. Its subcellular location is the host cytoplasm. It is found in the host cytosol. Part of the type VI secretion system (T6SS) specialized secretion system, which delivers several virulence factors in both prokaryotic and eukaryotic cells during infection. Forms the spike at the tip of the elongating tube probably formed by hemolysin co-regulated protein/Hcp. Allows the delivery of the TseL antibacterial toxin to target cells where it exerts its toxicity. Also acts directly as an actin-directed toxin that catalyzes the covalent cross-linking of host cytoplasmic monomeric actin. Mediates the cross-link between 'Lys-50' of one monomer and 'Glu-270' of another actin monomer, resulting in formation of highly toxic actin oligomers that cause cell rounding. The toxin can be highly efficient at very low concentrations by acting on formin homology family proteins: toxic actin oligomers bind with high affinity to formins and adversely affect both nucleation and elongation abilities of formins, causing their potent inhibition in both profilin-dependent and independent manners. Acts as an acid--amino-acid ligase that transfers the gamma-phosphoryl group of ATP to the 'Glu-270' actin residue, resulting in the formation of an activated acyl phosphate intermediate. This intermediate is further hydrolyzed and the energy of hydrolysis is utilized for the formation of the amide bond between actin subunits. The polypeptide is Actin cross-linking toxin VgrG1 (Vibrio cholerae serotype O1 (strain ATCC 39315 / El Tor Inaba N16961)).